Reading from the N-terminus, the 897-residue chain is Alanine--tRNA ligase (897 aa).

Positions 581, 585, 684, and 688 each coordinate Zn(2+).

The protein belongs to the class-II aminoacyl-tRNA synthetase family. Zn(2+) serves as cofactor.

It is found in the cytoplasm. It catalyses the reaction tRNA(Ala) + L-alanine + ATP = L-alanyl-tRNA(Ala) + AMP + diphosphate. Its function is as follows. Catalyzes the attachment of alanine to tRNA(Ala) in a two-step reaction: alanine is first activated by ATP to form Ala-AMP and then transferred to the acceptor end of tRNA(Ala). Also edits incorrectly charged Ser-tRNA(Ala) and Gly-tRNA(Ala) via its editing domain. The chain is Alanine--tRNA ligase from Mycobacterium sp. (strain JLS).